The following is a 279-amino-acid chain: MVRMFLQLVGCLMHRKMQPKLVLTPLHYITKNQRQWVAKPLEQDVITAFKARCQQYGFKSEAILPHDSYLINLGNPETEKLEKSRAAFIDEMQRCNQLGLTLLNFHPGSHLKKINESDCLRLIAESINMAHQEVPEVVAVIENTAGQGSNVGWRFEHLAEIIDQIEDKSRVGVCIDTCHTFAAGYDLRSEAATEVTFSEFDQVVGMSFLRGMHLNDSKGKLGSHLDRHHSLGEGEIGWDCFRYLMQASGFDNIPLVLETINPDIWQQEIMMLRSFVASE.

9 residues coordinate Zn(2+): H66, H106, E142, D176, H179, H213, D226, H228, and E258.

The protein belongs to the AP endonuclease 2 family. Zn(2+) is required as a cofactor.

It catalyses the reaction Endonucleolytic cleavage to 5'-phosphooligonucleotide end-products.. Functionally, endonuclease IV plays a role in DNA repair. It cleaves phosphodiester bonds at apurinic or apyrimidinic (AP) sites, generating a 3'-hydroxyl group and a 5'-terminal sugar phosphate. This is Probable endonuclease 4 from Photobacterium profundum (strain SS9).